The following is a 400-amino-acid chain: Diphosphomevalonate decarboxylase (400 aa).

(R)-5-diphosphomevalonate-binding positions include 25-28, arginine 80, 155-160, and threonine 211; these read YWGK and SGSACR.

The protein belongs to the diphosphomevalonate decarboxylase family. As to quaternary structure, homodimer.

It localises to the cytoplasm. The enzyme catalyses (R)-5-diphosphomevalonate + ATP = isopentenyl diphosphate + ADP + phosphate + CO2. It participates in steroid biosynthesis; cholesterol biosynthesis. Its function is as follows. Catalyzes the ATP dependent decarboxylation of (R)-5-diphosphomevalonate to form isopentenyl diphosphate (IPP). Functions in the mevalonate (MVA) pathway leading to isopentenyl diphosphate (IPP), a key precursor for the biosynthesis of isoprenoids and sterol synthesis. The polypeptide is Diphosphomevalonate decarboxylase (mvd) (Danio rerio (Zebrafish)).